The sequence spans 407 residues: Acetate kinase (407 aa).

Asn-10 lines the Mg(2+) pocket. Lys-17 provides a ligand contact to ATP. Arg-91 serves as a coordination point for substrate. Asp-150 (proton donor/acceptor) is an active-site residue. Residues 210 to 214, 285 to 287, and 338 to 342 contribute to the ATP site; these read HLGNG, DCR, and GIGEN. Residue Glu-392 coordinates Mg(2+).

The protein belongs to the acetokinase family. As to quaternary structure, homodimer. Mg(2+) serves as cofactor. The cofactor is Mn(2+).

The protein resides in the cytoplasm. It catalyses the reaction acetate + ATP = acetyl phosphate + ADP. Its pathway is metabolic intermediate biosynthesis; acetyl-CoA biosynthesis; acetyl-CoA from acetate: step 1/2. Functionally, catalyzes the formation of acetyl phosphate from acetate and ATP. Can also catalyze the reverse reaction. The chain is Acetate kinase from Mannheimia succiniciproducens (strain KCTC 0769BP / MBEL55E).